The chain runs to 257 residues: tRNA pseudouridine synthase A (257 aa).

D52 functions as the Nucleophile in the catalytic mechanism. Substrate is bound at residue Y111.

It belongs to the tRNA pseudouridine synthase TruA family. As to quaternary structure, homodimer.

The catalysed reaction is uridine(38/39/40) in tRNA = pseudouridine(38/39/40) in tRNA. Functionally, formation of pseudouridine at positions 38, 39 and 40 in the anticodon stem and loop of transfer RNAs. In Dinoroseobacter shibae (strain DSM 16493 / NCIMB 14021 / DFL 12), this protein is tRNA pseudouridine synthase A.